We begin with the raw amino-acid sequence, 105 residues long: UPF0235 protein A1C_06510 (105 aa).

It belongs to the UPF0235 family.

This Rickettsia akari (strain Hartford) protein is UPF0235 protein A1C_06510.